The following is a 450-amino-acid chain: Glucose-6-phosphate isomerase (450 aa).

Phosphothreonine is present on threonine 39. Catalysis depends on glutamate 291, which acts as the Proton donor. Active-site residues include histidine 312 and lysine 426.

Belongs to the GPI family.

The protein localises to the cytoplasm. It catalyses the reaction alpha-D-glucose 6-phosphate = beta-D-fructose 6-phosphate. It functions in the pathway carbohydrate biosynthesis; gluconeogenesis. Its pathway is carbohydrate degradation; glycolysis; D-glyceraldehyde 3-phosphate and glycerone phosphate from D-glucose: step 2/4. Catalyzes the reversible isomerization of glucose-6-phosphate to fructose-6-phosphate. This chain is Glucose-6-phosphate isomerase, found in Halalkalibacterium halodurans (strain ATCC BAA-125 / DSM 18197 / FERM 7344 / JCM 9153 / C-125) (Bacillus halodurans).